The sequence spans 604 residues: Pescadillo homolog (604 aa).

A disordered region spans residues 275–299 (NSEPAGLIEDKEGEDNKESSKTDES). Residues 282-299 (IEDKEGEDNKESSKTDES) show a composition bias toward basic and acidic residues. A BRCT domain is found at 337–427 (ECRSLFKNLK…IILPTEGYIV (91 aa)). Disordered stretches follow at residues 518 to 557 (KTFSNRTADNQPDVVDKSDTKEADDHMEDSHKQAEKDAAD) and 574 to 604 (IEINQERKKDKVNLLKKRKKNADSSASAKGR). 2 stretches are compositionally biased toward basic and acidic residues: residues 531–557 (VVDKSDTKEADDHMEDSHKQAEKDAAD) and 577–586 (NQERKKDKVN).

Belongs to the pescadillo family.

The protein resides in the nucleus. Its subcellular location is the nucleolus. It is found in the nucleoplasm. Its function is as follows. Required for maturation of ribosomal RNAs and formation of the large ribosomal subunit. The protein is Pescadillo homolog (PES) of Oryza sativa subsp. japonica (Rice).